Reading from the N-terminus, the 101-residue chain is Small ribosomal subunit protein uS14 (101 aa).

Residues 52–72 (PRDSSPVRQRRRCRSTGRPRG) are disordered. Positions 59–72 (RQRRRCRSTGRPRG) are enriched in basic residues.

The protein belongs to the universal ribosomal protein uS14 family. Part of the 30S ribosomal subunit. Contacts proteins S3 and S10.

In terms of biological role, binds 16S rRNA, required for the assembly of 30S particles and may also be responsible for determining the conformation of the 16S rRNA at the A site. The polypeptide is Small ribosomal subunit protein uS14 (Nitrosococcus oceani (strain ATCC 19707 / BCRC 17464 / JCM 30415 / NCIMB 11848 / C-107)).